The sequence spans 88 residues: Acyl-CoA-binding domain-containing protein 7 (88 aa).

Positions 3-88 (LQADFDRAAE…AKELIEKYGI (86 aa)) constitute an ACB domain. An acyl-CoA contacts are provided by residues arginine 15, 30–34 (YGLYK), lysine 56, and tyrosine 75.

It belongs to the ACBD7 family.

Functionally, binds medium- and long-chain acyl-CoA esters. The polypeptide is Acyl-CoA-binding domain-containing protein 7 (ACBD7) (Homo sapiens (Human)).